A 359-amino-acid chain; its full sequence is Peptide chain release factor 1 (359 aa).

An N5-methylglutamine modification is found at glutamine 233.

Belongs to the prokaryotic/mitochondrial release factor family. In terms of processing, methylated by PrmC. Methylation increases the termination efficiency of RF1.

The protein localises to the cytoplasm. Its function is as follows. Peptide chain release factor 1 directs the termination of translation in response to the peptide chain termination codons UAG and UAA. This chain is Peptide chain release factor 1, found in Ruminiclostridium cellulolyticum (strain ATCC 35319 / DSM 5812 / JCM 6584 / H10) (Clostridium cellulolyticum).